The following is a 152-amino-acid chain: Transcription factor XE1.1 (152 aa).

Disordered regions lie at residues 1-54 (RDDF…ANNA) and 123-152 (KVSA…MGHM). Composition is skewed to basic and acidic residues over residues 7 to 22 (DDMK…EMKS) and 38 to 54 (PEQK…ANNA). Residues 47 to 100 (ERRMANNARERLRVRDINEAFKELGRMCQLHLKSEKPQTKLLILHQAVAVILNL) form the bHLH domain. The tract at residues 102-125 (QQVRERNLNPKAACLKRREEEKVS) is class A specific domain. The segment covering 143-152 (TDTTNPMGHM) has biased composition (polar residues).

In terms of assembly, efficient DNA binding requires dimerization with another bHLH protein. Forms homo- or heterooligomers with myogenin, E12 and ITF2 proteins.

It is found in the nucleus. In terms of biological role, transcriptional regulator. Involved in the initiation of neuronal differentiation. Activates transcription by binding to the E box-containing promoter. In Xenopus laevis (African clawed frog), this protein is Transcription factor XE1.1.